The chain runs to 792 residues: Kinesin-like protein KIF3C (792 aa).

The 354-residue stretch at 10 to 363 folds into the Kinesin motor domain; sequence ALKVVARCRP…LRFANRAKNI (354 aa). ATP is bound at residue 97–104; it reads GQTGTGKT. Disordered stretches follow at residues 249–287, 397–418, and 749–792; these read GSERQNKAGPNTTGGTATQPTGGGGGGGGGGGGGERPKE, MLGKRLRRKSSRRKKAVSAPAG, and RPST…LDHE. Residues 257–268 show a composition bias toward low complexity; sequence GPNTTGGTATQP. The segment covering 269 to 282 has biased composition (gly residues); the sequence is TGGGGGGGGGGGGG. Residues 374 to 627 adopt a coiled-coil conformation; the sequence is KDTLLREFQE…QNEQTRELKL (254 aa). The span at 397–412 shows a compositional bias: basic residues; the sequence is MLGKRLRRKSSRRKKA. A globular region spans residues 628–792; sequence KYLIIENFIP…LRPTTVLDHE (165 aa). Residues 773 to 792 are compositionally biased toward low complexity; sequence AHASLAASAALRPTTVLDHE.

It belongs to the TRAFAC class myosin-kinesin ATPase superfamily. Kinesin family. Kinesin II subfamily. Heterodimer of KIF3A and KIF3C.

Its subcellular location is the cytoplasm. The protein resides in the cytoskeleton. Microtubule-based anterograde translocator for membranous organelles. The protein is Kinesin-like protein KIF3C (KIF3C) of Bos taurus (Bovine).